A 346-amino-acid polypeptide reads, in one-letter code: Inositol 2-dehydrogenase/D-chiro-inositol 3-dehydrogenase (346 aa).

It belongs to the Gfo/Idh/MocA family. In terms of assembly, homotetramer.

The catalysed reaction is myo-inositol + NAD(+) = scyllo-inosose + NADH + H(+). The enzyme catalyses 1D-chiro-inositol + NAD(+) = scyllo-inosine + NADH + H(+). It participates in polyol metabolism; myo-inositol degradation into acetyl-CoA; acetyl-CoA from myo-inositol: step 1/7. Functionally, involved in the oxidation of myo-inositol (MI) and D-chiro-inositol (DCI) to 2-keto-myo-inositol (2KMI or 2-inosose) and 1-keto-D-chiro-inositol (1KDCI), respectively. The sequence is that of Inositol 2-dehydrogenase/D-chiro-inositol 3-dehydrogenase from Lacticaseibacillus casei (Lactobacillus casei).